The sequence spans 45 residues: Large ribosomal subunit protein bL34 (45 aa).

It belongs to the bacterial ribosomal protein bL34 family.

This chain is Large ribosomal subunit protein bL34, found in Paenarthrobacter aurescens (strain TC1).